We begin with the raw amino-acid sequence, 138 residues long: Large-conductance mechanosensitive channel (138 aa).

Helical transmembrane passes span 19–39, 40–60, and 81–101; these read VGVI…GDII, MPII…IPLA, and GSFL…FMVI.

This sequence belongs to the MscL family. As to quaternary structure, homopentamer.

It is found in the cell inner membrane. Its function is as follows. Channel that opens in response to stretch forces in the membrane lipid bilayer. May participate in the regulation of osmotic pressure changes within the cell. The sequence is that of Large-conductance mechanosensitive channel from Bradyrhizobium sp. (strain ORS 278).